A 215-amino-acid chain; its full sequence is MNIILFGPPGAGKGTQAKKLVDFYGIPQISTGDILRANVREGTELGLAAKAYMDKGELVPDQVLIGIIKNRLNEADCEKGFILDGYPRTVPQADALEAILDEIEKPIDVVLNLEVPDEVLVGRISGRLMCKCGASYHIISNPPKKDNVCDICGGEVFQRADDTAEAVQNRLDVYKKQTQPLINYYKEKGILVTLDGTKEIDVVFEDLKAILAKFA.

An ATP-binding site is contributed by 10 to 15 (GAGKGT). The tract at residues 30–59 (STGDILRANVREGTELGLAAKAYMDKGELV) is NMP. Residues threonine 31, arginine 36, 57–59 (ELV), 85–88 (GYPR), and glutamine 92 each bind AMP. The interval 126 to 162 (GRLMCKCGASYHIISNPPKKDNVCDICGGEVFQRADD) is LID. Position 127 (arginine 127) interacts with ATP. Zn(2+) contacts are provided by cysteine 130 and cysteine 132. 135–136 (SY) contacts ATP. Zn(2+) is bound by residues cysteine 149 and cysteine 152. Residues arginine 159 and arginine 170 each coordinate AMP. Lysine 198 provides a ligand contact to ATP.

It belongs to the adenylate kinase family. As to quaternary structure, monomer.

Its subcellular location is the cytoplasm. It carries out the reaction AMP + ATP = 2 ADP. The protein operates within purine metabolism; AMP biosynthesis via salvage pathway; AMP from ADP: step 1/1. Functionally, catalyzes the reversible transfer of the terminal phosphate group between ATP and AMP. Plays an important role in cellular energy homeostasis and in adenine nucleotide metabolism. This is Adenylate kinase from Methanosarcina acetivorans (strain ATCC 35395 / DSM 2834 / JCM 12185 / C2A).